A 175-amino-acid polypeptide reads, in one-letter code: Gamma-crystallin B (175 aa).

Beta/gamma crystallin 'Greek key' domains follow at residues 2–40 (GKIT…RVDS) and 41–83 (GCWM…CLIP). Residues 84 to 88 (QHSGT) are connecting peptide. Beta/gamma crystallin 'Greek key' domains lie at 89-129 (YRMR…NVME) and 130-172 (GCWV…RRVM).

The protein belongs to the beta/gamma-crystallin family.

Functionally, crystallins are the dominant structural components of the vertebrate eye lens. The sequence is that of Gamma-crystallin B (Crygb) from Mus musculus (Mouse).